Consider the following 204-residue polypeptide: Recombination protein RecR (204 aa).

The C4-type zinc-finger motif lies at 57-72 (CPTCFNYTDTDICRYC). Residues 80-181 (ESICVVEEPS…KLSRIAHGVP (102 aa)) enclose the Toprim domain.

It belongs to the RecR family.

Its function is as follows. May play a role in DNA repair. It seems to be involved in an RecBC-independent recombinational process of DNA repair. It may act with RecF and RecO. The protein is Recombination protein RecR of Bdellovibrio bacteriovorus (strain ATCC 15356 / DSM 50701 / NCIMB 9529 / HD100).